The sequence spans 259 residues: Bisphosphoglycerate mutase (259 aa).

N-acetylserine is present on Ser-2. Substrate-binding positions include 10–17, 23–24, Arg-62, 89–92, Arg-100, and 116–117; these read RHGEGQWN, CS, ERHY, and RR. The active-site Tele-phosphohistidine intermediate is His-11. The active-site Proton donor/acceptor is Glu-89. Thr-122 carries the phosphothreonine modification. Residue 189–190 coordinates substrate; that stretch reads GN.

Belongs to the phosphoglycerate mutase family. BPG-dependent PGAM subfamily. In terms of assembly, homodimer. As to expression, expressed in red blood cells. Expressed in placenta (labyrinthine trophoblasts).

The enzyme catalyses (2R)-3-phospho-glyceroyl phosphate = (2R)-2,3-bisphosphoglycerate + H(+). It carries out the reaction (2R)-2-phosphoglycerate = (2R)-3-phosphoglycerate. Its activity is regulated as follows. At alkaline pH BPGM favors the synthase reaction; however, at lower pH the phosphatase reaction is dominant. Inhibited by citrate. Its function is as follows. Plays a major role in regulating hemoglobin oxygen affinity by controlling the levels of its allosteric effector 2,3-bisphosphoglycerate (2,3-BPG). Also exhibits mutase (EC 5.4.2.11) activity. This chain is Bisphosphoglycerate mutase (Bpgm), found in Mus musculus (Mouse).